Reading from the N-terminus, the 840-residue chain is MMERTYGRRKPGMLNDDVSRAEHIFPSSSSPELEPVDFSTQESSCVWNYSSRSTFSDNDFSEKRNKRPRNGGGGFGSNSTLMEAQEFGELIENEDEVNFALDGLKKGHKVRIRRAALSSLLSICESQYQRRSLRALGISQSIIDAILGLCLDDIPSNLAAATLFFVLTTDGQDDHFMESPNSIKFLVKLLRPVVSASTKVKPRNIGSRLLSIIKDVDAARDAASMHDLSSCDIIDRAQEILVNCKELRLIDSYKIERMRPELSTKWVALLVMEKACLSKISFDDTSGTVKKSGGMFKEKLRELGGLDAVFDVVMDCHTVMESWVTHDTLSVEDIKDDLNKQSLMLLLKCLKIMENATFLSTENQIHLLRLNKSMGSHESRLSFTELMISVIKILSGLQLRAHRNEKHPHPQPHLASAVKKGFVTIISSDTCSTTGFSSIKSLSVSKRNQSAFLVGCSTTPKPGSQSSVMSTIDHCTLTTTAGSNTGSFAGRLASLGSGISRSKTRTSQTRESSCKKVENFASFEDSQDPFSFDLEDSGPSRWAVGKQKKSKGQKRKGSYRDKKDERSLQLFSSQEESNHGLNSQEESSDRDHHVTEQPSLTYDIDKGCLCLLSDCLLTAVKVLMNLTNGNSVGCREVAACGGLESMAELVVGHFPSFTRSPLYSQMESGTCHQKDKHLTDQELDFLVAILGLLVNLVEKNGINRSRLAAASVPITNPEGLQDSEQDMIPLLCSIFLTNKGSADTKDETSTFTLDDEEAVLESEKEAEKMIVEAYSALLLAFLSTESRSIRNAIRDYLPKRDMAILVPVLDRFVAFHTTLDMIPPETHKVVMEVIESCKLP.

Disordered stretches follow at residues 1–37 (MMER…EPVD), 56–78 (SDND…FGSN), and 532–594 (FDLE…DHHV). Positions 546-557 (KQKKSKGQKRKG) are enriched in basic residues. A compositionally biased stretch (basic and acidic residues) spans 558-567 (SYRDKKDERS). Over residues 569–585 (QLFSSQEESNHGLNSQE) the composition is skewed to polar residues. The WAPL domain occupies 764–819 (KEAEKMIVEAYSALLLAFLSTESRSIRNAIRDYLPKRDMAILVPVLDRFVAFHTTL).

The protein belongs to the WAPL family. Interacts with the cohesin complex throughout the cell cycle. In terms of tissue distribution, expressed in roots, leaves, buds and siliques.

The protein localises to the nucleus. Its subcellular location is the chromosome. Functionally, regulator of sister chromatid cohesion in meiosis which negatively regulates cohesin association with chromatin, acting as an antagonist of CTF7. Cohesion ensures that chromosome partitioning is accurate in both meiotic and mitotic cells and plays an important role in DNA repair. Essential for the prophase removal of cohesin during meiosis thus determining the timely release of meiotic cohesion. Important for proper spindle attachment and assembly during meiosis. Helps to prevent abnormal centromere association during prophase I in meiocytes. Required for early embryonic patterning. Also involved in chromosome segregation during mitosis. The polypeptide is Wings apart-like protein 2 (Arabidopsis thaliana (Mouse-ear cress)).